The chain runs to 117 residues: Large ribosomal subunit protein bL19 (117 aa).

It belongs to the bacterial ribosomal protein bL19 family.

In terms of biological role, this protein is located at the 30S-50S ribosomal subunit interface and may play a role in the structure and function of the aminoacyl-tRNA binding site. The protein is Large ribosomal subunit protein bL19 of Vibrio campbellii (strain ATCC BAA-1116).